Consider the following 173-residue polypeptide: Photosystem I assembly protein Ycf3 (173 aa).

3 TPR repeats span residues 35 to 68 (AYVY…ETDP), 72 to 105 (GETL…NPKQ), and 120 to 153 (GRIA…NPGG).

The protein belongs to the Ycf3 family.

The protein resides in the cellular thylakoid membrane. Its function is as follows. Essential for the assembly of the photosystem I (PSI) complex. May act as a chaperone-like factor to guide the assembly of the PSI subunits. The protein is Photosystem I assembly protein Ycf3 of Synechococcus sp. (strain CC9902).